The following is a 255-amino-acid chain: Hydroxyacylglutathione hydrolase (255 aa).

H52, H54, D56, H57, H109, D126, and H166 together coordinate Zn(2+).

This sequence belongs to the metallo-beta-lactamase superfamily. Glyoxalase II family. As to quaternary structure, monomer. Requires Zn(2+) as cofactor.

The catalysed reaction is an S-(2-hydroxyacyl)glutathione + H2O = a 2-hydroxy carboxylate + glutathione + H(+). Its pathway is secondary metabolite metabolism; methylglyoxal degradation; (R)-lactate from methylglyoxal: step 2/2. In terms of biological role, thiolesterase that catalyzes the hydrolysis of S-D-lactoyl-glutathione to form glutathione and D-lactic acid. The sequence is that of Hydroxyacylglutathione hydrolase from Anaeromyxobacter dehalogenans (strain 2CP-C).